The sequence spans 733 residues: Catalase-peroxidase 2 (733 aa).

Positions 1–35 (MAEAETHPPIGESQTEPAESGCPMRIKPPVEGGSN) are disordered. A cross-link (tryptophyl-tyrosyl-methioninium (Trp-Tyr) (with M-260)) is located at residues 106 to 234 (WHAAGTYRVE…PXXPHMGLIY (129 aa)). The active-site Proton acceptor is H107. Residues 234-260 (YVNPEGPEGNPDYLAAAIDIRETFGRM) constitute a cross-link (tryptophyl-tyrosyl-methioninium (Tyr-Met) (with W-106)). Position 275 (H275) interacts with heme.

It belongs to the peroxidase family. Peroxidase/catalase subfamily. Homodimer or homotetramer. Heme b is required as a cofactor. In terms of processing, formation of the three residue Trp-Tyr-Met cross-link is important for the catalase, but not the peroxidase activity of the enzyme.

It catalyses the reaction H2O2 + AH2 = A + 2 H2O. The enzyme catalyses 2 H2O2 = O2 + 2 H2O. Functionally, bifunctional enzyme with both catalase and broad-spectrum peroxidase activity. May play a role in the intracellular survival of mycobacteria. The sequence is that of Catalase-peroxidase 2 from Mycolicibacterium fortuitum (Mycobacterium fortuitum).